A 515-amino-acid polypeptide reads, in one-letter code: Aldehyde dehydrogenase (515 aa).

The segment covering 1–12 has biased composition (polar residues); that stretch reads MTVAEQQPQHQG. The interval 1–20 is disordered; sequence MTVAEQQPQHQGYANPGTPG. An NAD(+)-binding site is contributed by 228–234; the sequence is GFGLEAG. Catalysis depends on residues Glu-272 and Cys-311.

Belongs to the aldehyde dehydrogenase family.

It catalyses the reaction an aldehyde + NAD(+) + H2O = a carboxylate + NADH + 2 H(+). The chain is Aldehyde dehydrogenase (aldA) from Deinococcus radiodurans (strain ATCC 13939 / DSM 20539 / JCM 16871 / CCUG 27074 / LMG 4051 / NBRC 15346 / NCIMB 9279 / VKM B-1422 / R1).